The sequence spans 612 residues: uncharacterized protein (612 aa).

Residues 8–75 form the J domain; that stretch reads ELYLALGLPK…SKKEIYDNFG (68 aa). A helical transmembrane segment spans residues 445-465; it reads AVFWGLVFPITSILGVEQFFL.

Belongs to the DnaJ family.

It localises to the membrane. This is an uncharacterized protein from Schizosaccharomyces pombe (strain 972 / ATCC 24843) (Fission yeast).